The following is a 679-amino-acid chain: Protein hook (679 aa).

Positions 5–123 (NGMYYSLLEW…RLLQLVLGCA (119 aa)) constitute a Calponin-homology (CH) domain. Positions 140–627 (EEELQANIMR…SKTKMSTMEE (488 aa)) form a coiled coil.

The protein belongs to the hook family. In terms of assembly, homodimer. Interacts with microtubules via its N-terminus.

The protein resides in the cytoplasm. The protein localises to the cytoskeleton. Its subcellular location is the endosome. It localises to the synapse. In terms of biological role, involved in endocytic trafficking by stabilizing organelles of the endocytic pathway. Probably acts as a cytoskeletal linker protein required to tether endosome vesicles to the cytoskeleton. Involved in modulation of endocytosis at stages required for down-regulation of membrane proteins that control synapse size. Not involved in synaptic vesicle recycling. Required in R7 cells for boss endocytosis into multivesicular bodies (MVBs). Has a role in regulating adult longevity. This Drosophila mojavensis (Fruit fly) protein is Protein hook.